A 345-amino-acid polypeptide reads, in one-letter code: Phosphate acyltransferase (345 aa).

This sequence belongs to the PlsX family. As to quaternary structure, homodimer. Probably interacts with PlsY.

Its subcellular location is the cytoplasm. The enzyme catalyses a fatty acyl-[ACP] + phosphate = an acyl phosphate + holo-[ACP]. It functions in the pathway lipid metabolism; phospholipid metabolism. Functionally, catalyzes the reversible formation of acyl-phosphate (acyl-PO(4)) from acyl-[acyl-carrier-protein] (acyl-ACP). This enzyme utilizes acyl-ACP as fatty acyl donor, but not acyl-CoA. In Wolbachia sp. subsp. Brugia malayi (strain TRS), this protein is Phosphate acyltransferase.